The sequence spans 44 residues: Protein PsbN (44 aa).

Residues 6–26 (FFFTFFLWFLLLSATGYSIYV) traverse the membrane as a helical segment.

Belongs to the PsbN family.

It is found in the plastid. It localises to the chloroplast thylakoid membrane. Its function is as follows. May play a role in photosystem I and II biogenesis. The protein is Protein PsbN of Tetradesmus obliquus (Green alga).